The sequence spans 589 residues: Sulfite reductase [NADPH] hemoprotein beta-component (589 aa).

[4Fe-4S] cluster-binding residues include cysteine 443, cysteine 449, cysteine 488, and cysteine 492. Cysteine 492 provides a ligand contact to siroheme.

It belongs to the nitrite and sulfite reductase 4Fe-4S domain family. In terms of assembly, alpha(8)-beta(8). The alpha component is a flavoprotein, the beta component is a hemoprotein. Requires siroheme as cofactor. The cofactor is [4Fe-4S] cluster.

It carries out the reaction hydrogen sulfide + 3 NADP(+) + 3 H2O = sulfite + 3 NADPH + 4 H(+). The protein operates within sulfur metabolism; hydrogen sulfide biosynthesis; hydrogen sulfide from sulfite (NADPH route): step 1/1. Component of the sulfite reductase complex that catalyzes the 6-electron reduction of sulfite to sulfide. This is one of several activities required for the biosynthesis of L-cysteine from sulfate. In Neisseria meningitidis serogroup C (strain 053442), this protein is Sulfite reductase [NADPH] hemoprotein beta-component.